Here is a 140-residue protein sequence, read N- to C-terminus: 3-hydroxyacyl-[acyl-carrier-protein] dehydratase FabZ (140 aa).

The active site involves H48.

The protein belongs to the thioester dehydratase family. FabZ subfamily.

It is found in the cytoplasm. The catalysed reaction is a (3R)-hydroxyacyl-[ACP] = a (2E)-enoyl-[ACP] + H2O. Functionally, involved in unsaturated fatty acids biosynthesis. Catalyzes the dehydration of short chain beta-hydroxyacyl-ACPs and long chain saturated and unsaturated beta-hydroxyacyl-ACPs. The sequence is that of 3-hydroxyacyl-[acyl-carrier-protein] dehydratase FabZ from Ligilactobacillus salivarius (strain UCC118) (Lactobacillus salivarius).